Consider the following 268-residue polypeptide: Tryptophan synthase alpha chain (268 aa).

Active-site proton acceptor residues include glutamate 49 and aspartate 60.

The protein belongs to the TrpA family. Tetramer of two alpha and two beta chains.

It carries out the reaction (1S,2R)-1-C-(indol-3-yl)glycerol 3-phosphate + L-serine = D-glyceraldehyde 3-phosphate + L-tryptophan + H2O. Its pathway is amino-acid biosynthesis; L-tryptophan biosynthesis; L-tryptophan from chorismate: step 5/5. The alpha subunit is responsible for the aldol cleavage of indoleglycerol phosphate to indole and glyceraldehyde 3-phosphate. The polypeptide is Tryptophan synthase alpha chain (Escherichia coli O157:H7).